The following is a 547-amino-acid chain: MAAKEVKFGDSARKKMLVGVNVLADAVKATLGPKGRNVVLDKSFGAPTITKDGVSVAKEIELKDKFENMGAQLVKDVASKANDAAGDGTTTATVLAQAIVNEGLKAVAAGMNPMDLKRGIDKATVAIVAQLKELAKPCADTKAIAQVGTISANSDESIGQIIAEAMEKVGKEGVITVEEGSGLENELSVVEGMQFDRGYLSPYFVNKPDTMAAELDSPLLLLVDKKISNIREMLPVLEAVAKAGRPLLIVAEDVEGEALATLVVNNMRGIVKVAAVKAPGFGDRRKAMLQDIAILTGGTVISEEVGLSLEGATLEHLGNAKRVVINKENTTIIDGAGVQADIEARVLQIRKQIEETTSDYDREKLQERLAKLAGGVAVIKVGAATEVEMKEKKARVEDALHATRAAVEEGVVPGGGVALVRALQAIEGLKGDNEEQNVGIALLRRAVEAPLRQIVANAGDEPSVVVDKVKQGSGNYGFNAATGVYGDMIEMGILDPAKVTRSALQAAASIGGLMITTEAMVAEIVEDKPAMGGMPDMGGMGGMGGMM.

ATP contacts are provided by residues 30-33 (TLGP), Lys51, 87-91 (DGTTT), Gly415, 479-481 (NAA), and Asp495.

Belongs to the chaperonin (HSP60) family. Forms a cylinder of 14 subunits composed of two heptameric rings stacked back-to-back. Interacts with the co-chaperonin GroES.

It is found in the cytoplasm. It carries out the reaction ATP + H2O + a folded polypeptide = ADP + phosphate + an unfolded polypeptide.. In terms of biological role, together with its co-chaperonin GroES, plays an essential role in assisting protein folding. The GroEL-GroES system forms a nano-cage that allows encapsulation of the non-native substrate proteins and provides a physical environment optimized to promote and accelerate protein folding. In Pseudomonas paraeruginosa (strain DSM 24068 / PA7) (Pseudomonas aeruginosa (strain PA7)), this protein is Chaperonin GroEL.